Reading from the N-terminus, the 129-residue chain is Ubiquinol-cytochrome-c reductase complex assembly factor 2 (129 aa).

Residues 1–13 (MSATRYRRFLKLC) constitute a mitochondrion transit peptide.

The protein resides in the mitochondrion matrix. The protein localises to the mitochondrion nucleoid. It is found in the mitochondrion. In terms of biological role, required for the assembly of the ubiquinol-cytochrome c reductase complex (mitochondrial respiratory chain complex III or cytochrome b-c1 complex). May play a role in the modulation of respiratory chain activities such as oxygen consumption and ATP production. May be involved in cytochrome b translation and/or stability. This is Ubiquinol-cytochrome-c reductase complex assembly factor 2 (uqcc2) from Danio rerio (Zebrafish).